The primary structure comprises 78 residues: Acyl carrier protein (78 aa).

The 76-residue stretch at 2-77 (STIEESVKAI…AAIDFIQASQ (76 aa)) folds into the Carrier domain. O-(pantetheine 4'-phosphoryl)serine is present on serine 37.

The protein belongs to the acyl carrier protein (ACP) family. 4'-phosphopantetheine is transferred from CoA to a specific serine of apo-ACP by AcpS. This modification is essential for activity because fatty acids are bound in thioester linkage to the sulfhydryl of the prosthetic group.

The protein resides in the cytoplasm. The protein operates within lipid metabolism; fatty acid biosynthesis. Functionally, carrier of the growing fatty acid chain in fatty acid biosynthesis. The sequence is that of Acyl carrier protein from Sodalis glossinidius (strain morsitans).